Reading from the N-terminus, the 324-residue chain is Ribonucleoside-diphosphate reductase subunit beta nrdF2 (324 aa).

Fe cation is bound by residues Glu103 and His106. Residue Tyr110 is part of the active site. 3 residues coordinate Fe cation: Glu163, Glu197, and His200.

Belongs to the ribonucleoside diphosphate reductase small chain family. In terms of assembly, tetramer of two alpha and two beta subunits. It depends on Fe cation as a cofactor.

It catalyses the reaction a 2'-deoxyribonucleoside 5'-diphosphate + [thioredoxin]-disulfide + H2O = a ribonucleoside 5'-diphosphate + [thioredoxin]-dithiol. Its function is as follows. Provides the precursors necessary for DNA synthesis. Catalyzes the biosynthesis of deoxyribonucleotides from the corresponding ribonucleotides. In Mycobacterium tuberculosis (strain CDC 1551 / Oshkosh), this protein is Ribonucleoside-diphosphate reductase subunit beta nrdF2 (nrdF2).